The chain runs to 168 residues: MQLNWKESGLRWYWVVVVVFLADQLSKQWVLANFDLYESVKLLPFFNFTYVRNYGAAFSFLHDAGGWQRWLFTAVAVGFSVLLTIWLRKQPANMVRLNLAYTLVIGGALGNLIDRLQHGFVVDFLDFYWNTAHYPAFNIADAAIFIGAVLIIIDSFKASSSDDKAIKE.

A run of 3 helical transmembrane segments spans residues Trp12–Ala32, Trp67–Leu87, and Asn93–Ile113. Active-site residues include Asp123 and Asp141. Residues Ala136–Phe156 traverse the membrane as a helical segment.

Belongs to the peptidase A8 family.

It localises to the cell inner membrane. It carries out the reaction Release of signal peptides from bacterial membrane prolipoproteins. Hydrolyzes -Xaa-Yaa-Zaa-|-(S,diacylglyceryl)Cys-, in which Xaa is hydrophobic (preferably Leu), and Yaa (Ala or Ser) and Zaa (Gly or Ala) have small, neutral side chains.. The protein operates within protein modification; lipoprotein biosynthesis (signal peptide cleavage). Functionally, this protein specifically catalyzes the removal of signal peptides from prolipoproteins. The polypeptide is Lipoprotein signal peptidase (Shewanella amazonensis (strain ATCC BAA-1098 / SB2B)).